We begin with the raw amino-acid sequence, 338 residues long: Tetraacyldisaccharide 4'-kinase (338 aa).

51–58 (HLGGAGKT) is an ATP binding site.

The protein belongs to the LpxK family.

It catalyses the reaction a lipid A disaccharide + ATP = a lipid IVA + ADP + H(+). It functions in the pathway glycolipid biosynthesis; lipid IV(A) biosynthesis; lipid IV(A) from (3R)-3-hydroxytetradecanoyl-[acyl-carrier-protein] and UDP-N-acetyl-alpha-D-glucosamine: step 6/6. Functionally, transfers the gamma-phosphate of ATP to the 4'-position of a tetraacyldisaccharide 1-phosphate intermediate (termed DS-1-P) to form tetraacyldisaccharide 1,4'-bis-phosphate (lipid IVA). This chain is Tetraacyldisaccharide 4'-kinase, found in Rhodopseudomonas palustris (strain BisB5).